A 376-amino-acid polypeptide reads, in one-letter code: Sulfate/thiosulfate import ATP-binding protein CysA 1 (376 aa).

The region spanning 3 to 237 is the ABC transporter domain; it reads IRLTNISKKF…PNSRFVFDFL (235 aa). 35-42 lines the ATP pocket; the sequence is GPSGSGKT.

It belongs to the ABC transporter superfamily. Sulfate/tungstate importer (TC 3.A.1.6) family. In terms of assembly, the complex is composed of two ATP-binding proteins (CysA), two transmembrane proteins (CysT and CysW) and a solute-binding protein (CysP).

The protein resides in the cell inner membrane. It carries out the reaction sulfate(out) + ATP + H2O = sulfate(in) + ADP + phosphate + H(+). The catalysed reaction is thiosulfate(out) + ATP + H2O = thiosulfate(in) + ADP + phosphate + H(+). Its function is as follows. Part of the ABC transporter complex CysAWTP involved in sulfate/thiosulfate import. Responsible for energy coupling to the transport system. The protein is Sulfate/thiosulfate import ATP-binding protein CysA 1 of Shewanella oneidensis (strain ATCC 700550 / JCM 31522 / CIP 106686 / LMG 19005 / NCIMB 14063 / MR-1).